Here is a 126-residue protein sequence, read N- to C-terminus: Aspartate 1-decarboxylase (126 aa).

Ser25 serves as the catalytic Schiff-base intermediate with substrate; via pyruvic acid. Ser25 bears the Pyruvic acid (Ser) mark. Position 57 (Thr57) interacts with substrate. The active-site Proton donor is the Tyr58. 72 to 74 contributes to the substrate binding site; sequence GAA.

This sequence belongs to the PanD family. As to quaternary structure, heterooctamer of four alpha and four beta subunits. Pyruvate is required as a cofactor. In terms of processing, is synthesized initially as an inactive proenzyme, which is activated by self-cleavage at a specific serine bond to produce a beta-subunit with a hydroxyl group at its C-terminus and an alpha-subunit with a pyruvoyl group at its N-terminus.

It is found in the cytoplasm. The enzyme catalyses L-aspartate + H(+) = beta-alanine + CO2. Its pathway is cofactor biosynthesis; (R)-pantothenate biosynthesis; beta-alanine from L-aspartate: step 1/1. Catalyzes the pyruvoyl-dependent decarboxylation of aspartate to produce beta-alanine. The polypeptide is Aspartate 1-decarboxylase (Campylobacter jejuni subsp. jejuni serotype O:23/36 (strain 81-176)).